The primary structure comprises 652 residues: Transmembrane 9 superfamily member 12 (652 aa).

The signal sequence occupies residues M1–G20. Residues F21 to W286 are Lumenal-facing. A helical transmembrane segment spans residues F287–F307. Residues L308–R362 are Cytoplasmic-facing. The helical transmembrane segment at I363 to S383 threads the bilayer. At R384–M386 the chain is on the lumenal side. The chain crosses the membrane as a helical span at residues L387–V407. At R408–S426 the chain is on the cytoplasmic side. The helical transmembrane segment at I427–W447 threads the bilayer. Residues S448–Y460 are Lumenal-facing. Residues F461–L481 form a helical membrane-spanning segment. The Cytoplasmic segment spans residues G482–L510. Residues L511–F531 form a helical membrane-spanning segment. At S532–Y541 the chain is on the lumenal side. The chain crosses the membrane as a helical span at residues V542–V562. Residues V563 to A580 are Cytoplasmic-facing. Residues F581 to F601 form a helical membrane-spanning segment. The Lumenal segment spans residues D602–M613. Residues L614–G634 traverse the membrane as a helical segment. Residues F635–D652 lie on the Cytoplasmic side of the membrane. The Endoplasmic reticulum export signal signature appears at F641–F646. Residues K650–D652 carry the Golgi retention signal motif.

Belongs to the nonaspanin (TM9SF) (TC 9.A.2) family.

It is found in the endosome membrane. It localises to the golgi apparatus membrane. The chain is Transmembrane 9 superfamily member 12 from Arabidopsis thaliana (Mouse-ear cress).